Reading from the N-terminus, the 183-residue chain is Large ribosomal subunit protein uL6 (183 aa).

The protein belongs to the universal ribosomal protein uL6 family. As to quaternary structure, part of the 50S ribosomal subunit.

This protein binds to the 23S rRNA, and is important in its secondary structure. It is located near the subunit interface in the base of the L7/L12 stalk, and near the tRNA binding site of the peptidyltransferase center. The sequence is that of Large ribosomal subunit protein uL6 from Malacoplasma penetrans (strain HF-2) (Mycoplasma penetrans).